Here is a 177-residue protein sequence, read N- to C-terminus: Parathyroid hormone-related protein (177 aa).

The signal sequence occupies residues M1 to G24. The propeptide occupies R25 to L34. Residues R57–H68 form an important for receptor binding region. Residues A74–H177 form a disordered region. Polar residues predominate over residues S76–N90. The Nuclear localization signal motif lies at T108–K129. Positions N109–P118 are enriched in basic and acidic residues. A compositionally biased stretch (basic residues) spans P122–K132.

It belongs to the parathyroid hormone family. As to quaternary structure, interacts with PTH1R (via N-terminal extracellular domain). In terms of processing, there are 3 principal secretory forms, called PTHrP[1-36], PTHrP[38-94], and osteostatin (PTHrP[107-139]) arising from endoproteolytic cleavage of the initial translation product. Each of these secretory forms is believed to have one or more of its own receptors that mediates the normal paracrine, autocrine and endocrine actions. Ubiquitous. Also expressed in the mammary gland.

The protein resides in the secreted. It localises to the cytoplasm. It is found in the nucleus. Neuroendocrine peptide which is a critical regulator of cellular and organ growth, development, migration, differentiation and survival and of epithelial calcium ion transport. Acts by binding to its receptor, PTH1R, activating G protein-coupled receptor signaling. Regulates endochondral bone development and epithelial-mesenchymal interactions during the formation of the mammary glands and teeth. Required for skeletal homeostasis. Promotes mammary mesenchyme differentiation and bud outgrowth by modulating mesenchymal cell responsiveness to BMPs. Up-regulates BMPR1A expression in the mammary mesenchyme and this increases the sensitivity of these cells to BMPs and allows them to respond to BMP4 in a paracrine and/or autocrine fashion. BMP4 signaling in the mesenchyme, in turn, triggers epithelial outgrowth and augments MSX2 expression, which causes the mammary mesenchyme to inhibit hair follicle formation within the nipple sheath. Promotes colon cancer cell migration and invasion in an integrin alpha-6/beta-1-dependent manner through activation of Rac1. Functionally, potent inhibitor of osteoclastic bone resorption. This is Parathyroid hormone-related protein from Homo sapiens (Human).